Reading from the N-terminus, the 296-residue chain is MNKIQESFLYMLKVERFFSKHTLKSYHDDLVQFNAFLEHEHLKLKSFEYKDARNYLSFLYSKGLKRTTVSRKISTLRSFYEFWMTQDDTVVNPFVQLVHPKKEQYLPHFFYEEEMSALFETVEADGHKGLRDRVILELLYGTGIRVSELVNIKLEDLDLNSPGVKVLGKGNKERFIPFGNMCRESIERYLELFPPIQNVKHDYLLVNINGRPITERGVRYVLNDIVKRTAGVTDIHPHKLRHTFATHMLNEGADLRTVQSLLGHVNLSTTGRYTHVSNQQLRKVYLNAHPRAKKEK.

Residues Met-1–Met-84 form the Core-binding (CB) domain. In terms of domain architecture, Tyr recombinase spans Tyr-105–Leu-286. Catalysis depends on residues Arg-145, Lys-169, His-238, Arg-241, and His-264. The active-site O-(3'-phospho-DNA)-tyrosine intermediate is the Tyr-273.

It belongs to the 'phage' integrase family. XerC subfamily. Forms a cyclic heterotetrameric complex composed of two molecules of XerC and two molecules of XerD.

The protein resides in the cytoplasm. Site-specific tyrosine recombinase, which acts by catalyzing the cutting and rejoining of the recombining DNA molecules. The XerC-XerD complex is essential to convert dimers of the bacterial chromosome into monomers to permit their segregation at cell division. It also contributes to the segregational stability of plasmids. The polypeptide is Tyrosine recombinase XerC (Staphylococcus carnosus (strain TM300)).